The primary structure comprises 91 residues: Non-specific lipid-transfer protein 1 (91 aa).

Disulfide bonds link cysteine 3/cysteine 50, cysteine 13/cysteine 27, cysteine 28/cysteine 73, and cysteine 48/cysteine 87.

It belongs to the plant LTP family.

Its function is as follows. Plant non-specific lipid-transfer proteins transfer phospholipids as well as galactolipids across membranes. May play a role in wax or cutin deposition in the cell walls of expanding epidermal cells and certain secretory tissues. This Prunus persica (Peach) protein is Non-specific lipid-transfer protein 1.